The primary structure comprises 384 residues: Acetylgalactosaminyl-O-glycosyl-glycoprotein beta-1,3-N-acetylglucosaminyltransferase (384 aa).

Over 1–12 (MAFPCRRSLTAK) the chain is Cytoplasmic. The helical; Signal-anchor for type II membrane protein transmembrane segment at 13–31 (TLACLLVGVSFLALQQWFL) threads the bilayer. Topologically, residues 32–384 (QAPRSPREER…LSCDRGHRVS (353 aa)) are lumenal. Residues 34-68 (PRSPREERSPQEETPEGPTDAPAADEPPSELVPGP) form a disordered region. 3 N-linked (GlcNAc...) asparagine glycosylation sites follow: Asn73, Asn77, and Asn196.

The protein belongs to the glycosyltransferase 31 family. Present in stomach and colon (at protein level). Restricted in the stomach, colon and small intestine, where core 3 structure is present.

It localises to the golgi apparatus membrane. The enzyme catalyses a 3-O-[N-acetyl-alpha-D-galactosaminyl]-L-threonyl-[protein] + UDP-N-acetyl-alpha-D-glucosamine = a 3-O-[N-acetyl-beta-D-glucosaminyl-(1-&gt;3)-N-acetyl-alpha-D-galactosaminyl]-L-threonyl-[protein] + UDP + H(+). The catalysed reaction is a 3-O-[N-acetyl-alpha-D-galactosaminyl]-L-seryl-[protein] + UDP-N-acetyl-alpha-D-glucosamine = 3-O-[N-acetyl-beta-D-glucosaminyl-(1-&gt;3)-N-acetyl-alpha-D-galactosaminyl]-L-seryl-[protein] + UDP + H(+). It functions in the pathway protein modification; protein glycosylation. Beta-1,3-N-acetylglucosaminyltransferase that synthesizes the core 3 structure of the O-glycan, an important precursor in the biosynthesis of mucin-type glycoproteins. Plays an important role in the synthesis of mucin-type O-glycans in digestive organs. The polypeptide is Acetylgalactosaminyl-O-glycosyl-glycoprotein beta-1,3-N-acetylglucosaminyltransferase (B3GNT6) (Homo sapiens (Human)).